A 424-amino-acid polypeptide reads, in one-letter code: UDP-N-acetylglucosamine 1-carboxyvinyltransferase (424 aa).

22–23 (KN) lines the phosphoenolpyruvate pocket. Residue Arg-96 participates in UDP-N-acetyl-alpha-D-glucosamine binding. Cys-120 acts as the Proton donor in catalysis. Position 120 is a 2-(S-cysteinyl)pyruvic acid O-phosphothioketal (Cys-120). UDP-N-acetyl-alpha-D-glucosamine-binding positions include 125–129 (RPVDQ), Asp-312, and Ile-334.

Belongs to the EPSP synthase family. MurA subfamily.

The protein resides in the cytoplasm. It catalyses the reaction phosphoenolpyruvate + UDP-N-acetyl-alpha-D-glucosamine = UDP-N-acetyl-3-O-(1-carboxyvinyl)-alpha-D-glucosamine + phosphate. The protein operates within cell wall biogenesis; peptidoglycan biosynthesis. Its function is as follows. Cell wall formation. Adds enolpyruvyl to UDP-N-acetylglucosamine. The protein is UDP-N-acetylglucosamine 1-carboxyvinyltransferase of Polynucleobacter necessarius subsp. necessarius (strain STIR1).